We begin with the raw amino-acid sequence, 228 residues long: Auxin-responsive protein IAA14 (228 aa).

Positions 8 to 12 (LCLGL) match the EAR-like (transcriptional repression) motif. Residues 110-210 (VAFVKVSMDG…SCKRLRIMKG (101 aa)) enclose the PB1 domain.

This sequence belongs to the Aux/IAA family. In terms of assembly, homodimers and heterodimers. Interacts with TPL. In terms of tissue distribution, preferentially expressed in roots and flowers.

The protein resides in the nucleus. In terms of biological role, aux/IAA proteins are short-lived transcriptional factors that function as repressors of early auxin response genes at low auxin concentrations. Repression is thought to result from the interaction with auxin response factors (ARFs), proteins that bind to the auxin-responsive promoter element (AuxRE). Formation of heterodimers with ARF proteins may alter their ability to modulate early auxin response genes expression. This Arabidopsis thaliana (Mouse-ear cress) protein is Auxin-responsive protein IAA14 (IAA14).